A 1047-amino-acid chain; its full sequence is Atrial natriuretic peptide receptor 2 (1047 aa).

A signal peptide spans 1 to 16 (MALPSLLLVVAALAGG). Over 17-458 (VRPPGARNLT…DKTPLSTLAI (442 aa)) the chain is Extracellular. 2 N-linked (GlcNAc...) asparagine glycosylation sites follow: asparagine 24 and asparagine 35. Cysteine 75 and cysteine 101 form a disulfide bridge. N-linked (GlcNAc...) asparagine glycans are attached at residues asparagine 161, asparagine 195, asparagine 244, asparagine 277, and asparagine 349. A helical transmembrane segment spans residues 459-478 (VALGTGVTFIMFGVSSFLIF). Topologically, residues 479-1047 (RKLMLEKELA…GEQKGPPGLL (569 aa)) are cytoplasmic. Serine 513 is modified (phosphoserine). Residues 513–786 (SRLTLSLRGS…PDFGQIKGFI (274 aa)) form the Protein kinase domain. Phosphothreonine is present on threonine 516. Phosphoserine is present on residues serine 518, serine 522, serine 523, and serine 526. A Phosphothreonine modification is found at threonine 529. The Guanylate cyclase domain occupies 861–991 (TIYFSDIVGF…DTVNTASRME (131 aa)).

Belongs to the adenylyl cyclase class-4/guanylyl cyclase family. Phosphorylated. Phosphorylation of the protein kinase-like domain is required for full activation by CNP. In terms of processing, glycosylated. As to expression, widely expressed. Expressed in the columnar proliferating and prehypertrophic chondrocyte layers of the tibia.

The protein localises to the cell membrane. The catalysed reaction is GTP = 3',5'-cyclic GMP + diphosphate. Functionally, receptor for the C-type natriuretic peptide NPPC/CNP hormone. Has guanylate cyclase activity upon binding of its ligand. May play a role in the regulation of skeletal growth. This Mus musculus (Mouse) protein is Atrial natriuretic peptide receptor 2 (Npr2).